We begin with the raw amino-acid sequence, 633 residues long: Breast carcinoma-amplified sequence 1 homolog (633 aa).

2 disordered regions span residues 1–34 (MGNQ…CVQN) and 57–422 (SSKD…KLFW). 2 stretches are compositionally biased toward polar residues: residues 24-34 (KVTSDNECVQN) and 57-68 (SSKDNVATSSPK). Position 127 is a phosphoserine (serine 127). The span at 278–288 (VDTTENSSSIM) shows a compositional bias: polar residues. A compositionally biased stretch (basic and acidic residues) spans 300–318 (TETKKDPEDTKATKADSVC). Phosphoserine is present on serine 328. Position 330 is a phosphothreonine (threonine 330). The segment covering 359–378 (NSPTTSANLKSDKANFTPQE) has biased composition (polar residues). Position 360 is a phosphoserine (serine 360). Basic and acidic residues predominate over residues 400 to 410 (SEGRDSGKEKA). Phosphoserine is present on residues serine 425 and serine 443. Residues 454-633 (ESSLQTVDLS…VSIGPVGKSK (180 aa)) are disordered. The span at 471-481 (TDVKVKEESKP) shows a compositional bias: basic and acidic residues. Over residues 510–522 (KDSSCQTSNSVEK) the composition is skewed to polar residues. The residue at position 523 (threonine 523) is a Phosphothreonine. Serine 525 carries the post-translational modification Phosphoserine. A compositionally biased stretch (basic and acidic residues) spans 537 to 555 (KNKETSSSKDKKSVDKKSA). 2 positions are modified to phosphoserine: serine 601 and serine 615. Positions 614–633 (MSDAQVQTDPVSIGPVGKSK) are interacts with DYNLL1 AND DYNLL2.

As to quaternary structure, homodimer. Interacts with DYNLL1 and DYNLL2. As to expression, highly expressed in the brain and, more specifically, in oligodendrocytes. Expressed in the Schwann cells (at protein level).

It localises to the cytoplasm. Required for myelination. This Mus musculus (Mouse) protein is Breast carcinoma-amplified sequence 1 homolog (Bcas1).